Consider the following 469-residue polypeptide: UDP-N-acetylmuramate--L-alanine ligase (469 aa).

Position 113 to 119 (113 to 119 (GAHGKTT)) interacts with ATP.

This sequence belongs to the MurCDEF family.

The protein localises to the cytoplasm. The catalysed reaction is UDP-N-acetyl-alpha-D-muramate + L-alanine + ATP = UDP-N-acetyl-alpha-D-muramoyl-L-alanine + ADP + phosphate + H(+). The protein operates within cell wall biogenesis; peptidoglycan biosynthesis. In terms of biological role, cell wall formation. This is UDP-N-acetylmuramate--L-alanine ligase from Syntrophobacter fumaroxidans (strain DSM 10017 / MPOB).